The chain runs to 312 residues: Zinc-finger homeodomain protein 9 (312 aa).

Residues 1–27 (MLEVRSMDMTPKSPEPESETPTRIQPA) form a disordered region. Phosphoserine is present on serine 13. The ZF-HD dimerization-type; degenerate zinc-finger motif lies at 52–103 (YKECLKNHAAAIGGHALDGCGEFMPSPSSTPSDPTSLKCAACGCHRNFHRRE). Disordered regions lie at residues 128–155 (QPHHRHHPPPPLAPPLPRSPNSSSPPPI) and 253–312 (FSGG…SSSS). A compositionally biased stretch (pro residues) spans 136 to 155 (PPPLAPPLPRSPNSSSPPPI). The segment at residues 192–255 (RKRFRTKFSS…NNKNSFKFSG (64 aa)) is a DNA-binding region (homeobox). Serine 273 carries the phosphoserine modification.

In terms of assembly, homo- and heterodimer with other ZFHD proteins. Interacts with MIF3; this interaction prevents nuclear localization and DNA-binding to inhibit transcription regulation activity. Binds to ZHD1, ZHD2 and ZHD11. In terms of tissue distribution, mostly expressed in flowers, stems and inflorescence and, to a lower extent, in leaves and stems.

It is found in the nucleus. In terms of biological role, putative transcription factor. This is Zinc-finger homeodomain protein 9 (ZHD9) from Arabidopsis thaliana (Mouse-ear cress).